A 46-amino-acid polypeptide reads, in one-letter code: Mu-hexatoxin-Mg2a (46 aa).

Intrachain disulfides connect C3-C18, C10-C24, C17-C36, C21-C43, and C26-C34.

This sequence belongs to the neurotoxin 02 (plectoxin) family. 02 (plectoxin) subfamily. Expressed by the venom gland.

The protein localises to the secreted. Functionally, competes for binding at site 3 of the insect voltage-gated sodium channel (Nav). Insecticidal neurotoxin. Causes temporary paralysis to lepidopteran larvae (10.3 nmol/g) or to crickets (doses from 0.93 to 119 ug/g). Is not toxic to mice when injected intracranially (high doses). The sequence is that of Mu-hexatoxin-Mg2a from Macrothele gigas (Japanese funnel web spider).